A 418-amino-acid polypeptide reads, in one-letter code: Serine hydroxymethyltransferase (418 aa).

(6S)-5,6,7,8-tetrahydrofolate is bound by residues Leu-121 and 125-127 (GHL). Lys-230 is subject to N6-(pyridoxal phosphate)lysine. 355 to 357 (SPF) is a binding site for (6S)-5,6,7,8-tetrahydrofolate.

Belongs to the SHMT family. Homodimer. Pyridoxal 5'-phosphate serves as cofactor.

It localises to the cytoplasm. It catalyses the reaction (6R)-5,10-methylene-5,6,7,8-tetrahydrofolate + glycine + H2O = (6S)-5,6,7,8-tetrahydrofolate + L-serine. Its pathway is one-carbon metabolism; tetrahydrofolate interconversion. It participates in amino-acid biosynthesis; glycine biosynthesis; glycine from L-serine: step 1/1. Catalyzes the reversible interconversion of serine and glycine with tetrahydrofolate (THF) serving as the one-carbon carrier. This reaction serves as the major source of one-carbon groups required for the biosynthesis of purines, thymidylate, methionine, and other important biomolecules. Also exhibits THF-independent aldolase activity toward beta-hydroxyamino acids, producing glycine and aldehydes, via a retro-aldol mechanism. In Streptococcus pyogenes serotype M1, this protein is Serine hydroxymethyltransferase.